A 587-amino-acid chain; its full sequence is Laccase abr2 (587 aa).

The signal sequence occupies residues 1–17; the sequence is MWYQSASLLGVAAVAQA. Plastocyanin-like domains lie at 41-137 and 168-350; these read IFVN…VHIR and LVML…ANDG. Residue Asn71 is glycosylated (N-linked (GlcNAc...) asparagine). The Cu cation site is built by His75, His77, His119, and His121. 4 N-linked (GlcNAc...) asparagine glycosylation sites follow: Asn228, Asn383, Asn420, and Asn462. Positions 397–577 constitute a Plastocyanin-like 3 domain; sequence PPYPAISPAS…ILMDGVDVWP (181 aa). A Cu cation-binding site is contributed by His487. N-linked (GlcNAc...) asparagine glycosylation occurs at Asn504.

It belongs to the multicopper oxidase family.

It localises to the cell surface. The protein operates within pigment biosynthesis; melanin biosynthesis. Functionally, laccase; part of the gene cluster that mediates the biosynthesis of dihydroxynaphthalene (DHN)-melanin, a bluish-green pigment and a structural component of the conidial wall. The first step of the pathway is the production of the heptaketide naphtopyrone YWA1 by the polyketide synthase alb1 though condensation of acetyl-CoA with malonyl-CoA. The naphtopyrone YWA1 is then converted to the pentaketide 1,3,6,8-tetrahydroxynaphthalene (1,3,6,8-THN) by the heptaketide hydrolyase ayg1 though chain-length shortening. 1,3,6,8-THN is substrate of the hydroxynaphthalene reductase arp2 to yield scytalone. The scytalone dehydratase arp1 then reduces scytalone to 1,3,8-THN. 1,3,8-THN is also substrate of the hydroxynaphthalene reductase arp2 to yield vermelone. Vermelone is further converted by the multicopper oxidase abr1 to 1,8-DHN. Finally the laccase abr2 transforms 1,8-DHN to DHN-melanin. DHN-melanin biosynthesis appears to be initiated in endosomes where early enzymes (abl1, ayg1, arp1 and arp2) localize, with exocytosis leading to melanin deposition on the cell surface where late enzymes (abr1 and abr2) localize. DHN-melanin is an important structural component of the outer cell wall and is required for the presence of conidial surface hydrophobins. DHN-melanin also plays a crucial role in fungal virulence, including a protective role against the host's immune defenses. DHN-melanin also protects conidia against amoeba predation. This chain is Laccase abr2, found in Aspergillus fumigatus (strain ATCC MYA-4609 / CBS 101355 / FGSC A1100 / Af293) (Neosartorya fumigata).